We begin with the raw amino-acid sequence, 453 residues long: Phenylalanine-4-hydroxylase (453 aa).

A2 is subject to N-acetylalanine. Position 16 is a phosphoserine; by PKA (S16). Residues 36 to 114 (SLIFSLKEEV…TVHELSRDKE (79 aa)) form the ACT domain. The Fe cation site is built by H285, H290, and E330.

It belongs to the biopterin-dependent aromatic amino acid hydroxylase family. Homodimer and homotetramer. Fe(2+) is required as a cofactor. In terms of processing, phosphorylation at Ser-16 increases basal activity and facilitates activation by the substrate phenylalanine.

The enzyme catalyses (6R)-L-erythro-5,6,7,8-tetrahydrobiopterin + L-phenylalanine + O2 = (4aS,6R)-4a-hydroxy-L-erythro-5,6,7,8-tetrahydrobiopterin + L-tyrosine. It functions in the pathway amino-acid degradation; L-phenylalanine degradation; acetoacetate and fumarate from L-phenylalanine: step 1/6. With respect to regulation, N-terminal region of PAH is thought to contain allosteric binding sites for phenylalanine and to constitute an 'inhibitory' domain that regulates the activity of a catalytic domain in the C-terminal portion of the molecule. Its function is as follows. Catalyzes the hydroxylation of L-phenylalanine to L-tyrosine. This chain is Phenylalanine-4-hydroxylase (Pah), found in Rattus norvegicus (Rat).